The primary structure comprises 185 residues: UPF0301 protein Shew_1144 (185 aa).

It belongs to the UPF0301 (AlgH) family.

This is UPF0301 protein Shew_1144 from Shewanella loihica (strain ATCC BAA-1088 / PV-4).